The sequence spans 626 residues: Chaperone protein HtpG (626 aa).

An a; substrate-binding region spans residues 1 to 341 (METKQFKAES…SEDLSLNISR (341 aa)). The tract at residues 342-552 (EILQHDRQLK…EGELSIEMEK (211 aa)) is b. Residues 490–509 (DLGIEGEEKENTSSSDDKEN) form a disordered region. Over residues 498–509 (KENTSSSDDKEN) the composition is skewed to basic and acidic residues. The interval 553–626 (VLNAMPNNQN…FTNNICKIMK (74 aa)) is c.

The protein belongs to the heat shock protein 90 family. In terms of assembly, homodimer.

Its subcellular location is the cytoplasm. In terms of biological role, molecular chaperone. Has ATPase activity. The protein is Chaperone protein HtpG of Clostridium botulinum (strain Loch Maree / Type A3).